The primary structure comprises 114 residues: NAD(P)H-quinone oxidoreductase subunit M (114 aa).

It belongs to the complex I NdhM subunit family. In terms of assembly, NDH-1 can be composed of about 15 different subunits; different subcomplexes with different compositions have been identified which probably have different functions.

It localises to the cellular thylakoid membrane. The catalysed reaction is a plastoquinone + NADH + (n+1) H(+)(in) = a plastoquinol + NAD(+) + n H(+)(out). The enzyme catalyses a plastoquinone + NADPH + (n+1) H(+)(in) = a plastoquinol + NADP(+) + n H(+)(out). NDH-1 shuttles electrons from an unknown electron donor, via FMN and iron-sulfur (Fe-S) centers, to quinones in the respiratory and/or the photosynthetic chain. The immediate electron acceptor for the enzyme in this species is believed to be plastoquinone. Couples the redox reaction to proton translocation, and thus conserves the redox energy in a proton gradient. Cyanobacterial NDH-1 also plays a role in inorganic carbon-concentration. This is NAD(P)H-quinone oxidoreductase subunit M from Acaryochloris marina (strain MBIC 11017).